Consider the following 503-residue polypeptide: MLKKFINSLWKLCQQDKYQRFTPIVDAIDTFCYEPIETPSKPPFIRDSVDVKRWMMLVVIALFPATFVAIWNSGLQSIVYSSGNPVLMEQFLHISGFGSYLSFVYKEIHIVPILWEGLKIFIPLLTISYVVGGTCEVLFAVVRGHKIAEGLLVTGILYPLTLPPTIPYWMAALGIAFGIVVSKELFGGTGMNILNPALSGRAFLFFTFPAKMSGDVWVGSNPGVIKDSLMKMNSSTGKVLIDGFSQSTCLQTLNSTPPSVKRLHVDAIAANMLHIPHVPTQDVIHSQFSLWTETHPGWVLDNLTLTQLQTFVTAPVAEGGLGLLPTQFDSAYAITDVIYGIGKFSAGNLFWGNIIGSLGETSTFACLLGAIFLIVTGIASWRTMAAFGIGAFLTGWLFKFISVLIVGQNGAWAPARFFIPAYRQLFLGGLAFGLVFMATDPVSSPTMKLGKWIYGFFIGFMTIVIRLINPAYPEGVMLAILLGNVFAPLIDYFAVRKYRKRGV.

Helical transmembrane passes span 55–75 (MMLV…NSGL), 94–114 (ISGF…VPIL), 120–140 (IFIP…VLFA), 161–181 (TLPP…GIVV), and 186–206 (FGGT…FLFF). Thr-248 is modified (FMN phosphoryl threonine). 5 helical membrane-spanning segments follow: residues 361-381 (TSTF…IASW), 386-406 (AFGI…VLIV), 417-437 (FFIP…LVFM), 452-472 (WIYG…NPAY), and 475-495 (GVML…YFAV).

The protein belongs to the NqrB/RnfD family. As to quaternary structure, composed of six subunits; NqrA, NqrB, NqrC, NqrD, NqrE and NqrF. The cofactor is FMN.

It localises to the cell inner membrane. It catalyses the reaction a ubiquinone + n Na(+)(in) + NADH + H(+) = a ubiquinol + n Na(+)(out) + NAD(+). In terms of biological role, NQR complex catalyzes the reduction of ubiquinone-1 to ubiquinol by two successive reactions, coupled with the transport of Na(+) ions from the cytoplasm to the periplasm. NqrA to NqrE are probably involved in the second step, the conversion of ubisemiquinone to ubiquinol. The protein is Na(+)-translocating NADH-quinone reductase subunit B of Chlamydia pneumoniae (Chlamydophila pneumoniae).